Here is a 93-residue protein sequence, read N- to C-terminus: MKIDESLVKRLETLSMVEIEDKASMAKDLAEIVEFVEMLNELDTSNVDATFSTLDNSTYLREDEPIKNNVIEEILEHAPKAKDGFFIVPKIIE.

It belongs to the GatC family. In terms of assembly, heterotrimer of A, B and C subunits.

The enzyme catalyses L-glutamyl-tRNA(Gln) + L-glutamine + ATP + H2O = L-glutaminyl-tRNA(Gln) + L-glutamate + ADP + phosphate + H(+). The catalysed reaction is L-aspartyl-tRNA(Asn) + L-glutamine + ATP + H2O = L-asparaginyl-tRNA(Asn) + L-glutamate + ADP + phosphate + 2 H(+). In terms of biological role, allows the formation of correctly charged Asn-tRNA(Asn) or Gln-tRNA(Gln) through the transamidation of misacylated Asp-tRNA(Asn) or Glu-tRNA(Gln) in organisms which lack either or both of asparaginyl-tRNA or glutaminyl-tRNA synthetases. The reaction takes place in the presence of glutamine and ATP through an activated phospho-Asp-tRNA(Asn) or phospho-Glu-tRNA(Gln). In Nautilia profundicola (strain ATCC BAA-1463 / DSM 18972 / AmH), this protein is Aspartyl/glutamyl-tRNA(Asn/Gln) amidotransferase subunit C.